Reading from the N-terminus, the 987-residue chain is Transposase for transposon Tn4430 (987 aa).

The protein belongs to the transposase 7 family.

Functionally, required for transposition of transposon Tn4430. The sequence is that of Transposase for transposon Tn4430 (tnpA) from Bacillus thuringiensis.